Here is a 440-residue protein sequence, read N- to C-terminus: Chromosome partition protein MukF (440 aa).

Residues 208-236 form a leucine-zipper region; that stretch reads LSETSGTLRELQDTLEAAGDKLQANLLRI.

The protein belongs to the MukF family. As to quaternary structure, interacts, and probably forms a ternary complex, with MukE and MukB via its C-terminal region. The complex formation is stimulated by calcium or magnesium. It is required for an interaction between MukE and MukB.

The protein resides in the cytoplasm. It localises to the nucleoid. In terms of biological role, involved in chromosome condensation, segregation and cell cycle progression. May participate in facilitating chromosome segregation by condensation DNA from both sides of a centrally located replisome during cell division. Not required for mini-F plasmid partitioning. Probably acts via its interaction with MukB and MukE. Overexpression results in anucleate cells. It has a calcium binding activity. The protein is Chromosome partition protein MukF of Escherichia coli (strain ATCC 8739 / DSM 1576 / NBRC 3972 / NCIMB 8545 / WDCM 00012 / Crooks).